The primary structure comprises 232 residues: tRNA (guanine-N(1)-)-methyltransferase (232 aa).

S-adenosyl-L-methionine is bound by residues Gly112 and 132-137 (IGDYVL).

This sequence belongs to the RNA methyltransferase TrmD family. As to quaternary structure, homodimer.

The protein localises to the cytoplasm. The enzyme catalyses guanosine(37) in tRNA + S-adenosyl-L-methionine = N(1)-methylguanosine(37) in tRNA + S-adenosyl-L-homocysteine + H(+). Functionally, specifically methylates guanosine-37 in various tRNAs. This chain is tRNA (guanine-N(1)-)-methyltransferase, found in Anaplasma phagocytophilum (strain HZ).